We begin with the raw amino-acid sequence, 190 residues long: Xanthine phosphoribosyltransferase (190 aa).

Xanthine contacts are provided by Leu-20 and Asn-27. 128-132 contributes to the 5-phospho-alpha-D-ribose 1-diphosphate binding site; sequence ANGHA. Lys-156 contacts xanthine.

It belongs to the purine/pyrimidine phosphoribosyltransferase family. Xpt subfamily. In terms of assembly, homodimer.

It localises to the cytoplasm. The enzyme catalyses XMP + diphosphate = xanthine + 5-phospho-alpha-D-ribose 1-diphosphate. It participates in purine metabolism; XMP biosynthesis via salvage pathway; XMP from xanthine: step 1/1. Its function is as follows. Converts the preformed base xanthine, a product of nucleic acid breakdown, to xanthosine 5'-monophosphate (XMP), so it can be reused for RNA or DNA synthesis. The chain is Xanthine phosphoribosyltransferase from Pseudomonas aeruginosa (strain LESB58).